A 122-amino-acid chain; its full sequence is Nuclear transport factor 2A (122 aa).

The residue at position 1 (Met-1) is an N-acetylmethionine. The NTF2 domain maps to 6–119 (VAKAFVEHYY…YYVFNDIFRL (114 aa)).

As to quaternary structure, interacts with RAN1. As to expression, expressed in roots, stems, leaves and flowers, and, at low levels, in siliques.

It localises to the cytoplasm. The protein localises to the nucleus. Its subcellular location is the nucleus envelope. Its function is as follows. Facilitates protein transport into the nucleus. Interacts with various nucleoporins and with Ran-GDP. Could be part of a multicomponent system of cytosolic factors that assemble at the pore complex during nuclear import. The polypeptide is Nuclear transport factor 2A (Arabidopsis thaliana (Mouse-ear cress)).